The following is a 390-amino-acid chain: Chorismate synthase 2 (390 aa).

Residues R39 and R45 each coordinate NADP(+). Residues 132-134 (RSS), 253-254 (NA), G298, 313-317 (KPIPT), and R339 each bind FMN.

Belongs to the chorismate synthase family. In terms of assembly, homotetramer. FMNH2 is required as a cofactor.

It carries out the reaction 5-O-(1-carboxyvinyl)-3-phosphoshikimate = chorismate + phosphate. It functions in the pathway metabolic intermediate biosynthesis; chorismate biosynthesis; chorismate from D-erythrose 4-phosphate and phosphoenolpyruvate: step 7/7. Functionally, catalyzes the anti-1,4-elimination of the C-3 phosphate and the C-6 proR hydrogen from 5-enolpyruvylshikimate-3-phosphate (EPSP) to yield chorismate, which is the branch point compound that serves as the starting substrate for the three terminal pathways of aromatic amino acid biosynthesis. This reaction introduces a second double bond into the aromatic ring system. The sequence is that of Chorismate synthase 2 from Bacillus cereus (strain ATCC 10987 / NRS 248).